A 90-amino-acid polypeptide reads, in one-letter code: uncharacterized protein (90 aa).

This is an uncharacterized protein from Thermoproteus tenax (TTV1).